The primary structure comprises 350 residues: Phenylalanine--tRNA ligase alpha subunit (350 aa).

Residue E271 participates in Mg(2+) binding.

Belongs to the class-II aminoacyl-tRNA synthetase family. Phe-tRNA synthetase alpha subunit type 1 subfamily. As to quaternary structure, tetramer of two alpha and two beta subunits. Requires Mg(2+) as cofactor.

The protein localises to the cytoplasm. It catalyses the reaction tRNA(Phe) + L-phenylalanine + ATP = L-phenylalanyl-tRNA(Phe) + AMP + diphosphate + H(+). The protein is Phenylalanine--tRNA ligase alpha subunit of Paracidovorax citrulli (strain AAC00-1) (Acidovorax citrulli).